The chain runs to 563 residues: Alpha-keto-acid decarboxylase (563 aa).

E59 lines the thiamine diphosphate pocket. A disordered region spans residues 348–367 (SPPVASPPAEPLPPPPPREQ). Over residues 351-366 (VASPPAEPLPPPPPRE) the composition is skewed to pro residues. The tract at residues 394–476 (TSFYGMADHR…VVVNNDGYTV (83 aa)) is thiamine pyrophosphate binding. Mg(2+) contacts are provided by D444, N471, and G473.

The protein belongs to the TPP enzyme family. Requires a metal cation as cofactor. The cofactor is thiamine diphosphate.

Decarboxylates branched-chain and aromatic alpha-keto acids to aldehydes. The polypeptide is Alpha-keto-acid decarboxylase (kdc) (Mycobacterium avium (strain 104)).